The primary structure comprises 394 residues: Alanine--glyoxylate aminotransferase (394 aa).

Residues 76-78 (AGH), Ser153, and Gln204 each bind pyridoxal 5'-phosphate. Ser153 serves as a coordination point for substrate. Lys205 is modified (N6-(pyridoxal phosphate)lysine). Positions 256 and 259 each coordinate pyridoxal 5'-phosphate. A substrate-binding site is contributed by Arg356.

Belongs to the class-V pyridoxal-phosphate-dependent aminotransferase family. In terms of assembly, homodimer. It depends on pyridoxal 5'-phosphate as a cofactor.

The protein resides in the peroxisome. The enzyme catalyses glyoxylate + L-alanine = glycine + pyruvate. It carries out the reaction (2S)-2-aminobutanoate + glyoxylate = 2-oxobutanoate + glycine. The catalysed reaction is glyoxylate + L-phenylalanine = 3-phenylpyruvate + glycine. It catalyses the reaction glyoxylate + L-serine = 3-hydroxypyruvate + glycine. The enzyme catalyses 2-oxobutanoate + L-alanine = (2S)-2-aminobutanoate + pyruvate. It carries out the reaction L-phenylalanine + pyruvate = 3-phenylpyruvate + L-alanine. The catalysed reaction is L-serine + pyruvate = 3-hydroxypyruvate + L-alanine. Catalyzes the pyridoxal 5'-phosphate-dependent transamination of alanine with glyoxylate as an amino group acceptor. Can also catalyze, although with much less efficiency, the transamination of amino-butyrate, phenylalanine and serine with glyoxylate or pyruvate as an amino group acceptor. Does not catalyze the transamination of both 3-hydroxykynurenine and L-kynurenine. May play a role in the detoxification of glyoxylate, a toxic plant metabolite from the fly diet. This Drosophila melanogaster (Fruit fly) protein is Alanine--glyoxylate aminotransferase.